Reading from the N-terminus, the 121-residue chain is Small ribosomal subunit protein uS13 (121 aa).

A disordered region spans residues 99-121; it reads GQRTRTNARTRRGARKTVAGKKK. Over residues 100–121 the composition is skewed to basic residues; that stretch reads QRTRTNARTRRGARKTVAGKKK.

The protein belongs to the universal ribosomal protein uS13 family. As to quaternary structure, part of the 30S ribosomal subunit. Forms a loose heterodimer with protein S19. Forms two bridges to the 50S subunit in the 70S ribosome.

Functionally, located at the top of the head of the 30S subunit, it contacts several helices of the 16S rRNA. In the 70S ribosome it contacts the 23S rRNA (bridge B1a) and protein L5 of the 50S subunit (bridge B1b), connecting the 2 subunits; these bridges are implicated in subunit movement. Contacts the tRNAs in the A and P-sites. In Synechococcus sp. (strain RCC307), this protein is Small ribosomal subunit protein uS13.